Here is a 133-residue protein sequence, read N- to C-terminus: Thioredoxin H2 (133 aa).

The interval 1 to 22 (MGGALSTVFGSGEDATAAGTES) is disordered. A Thioredoxin domain is found at 6–133 (STVFGSGEDA…LEKKVSKLRA (128 aa)). Residues C59 and C62 each act as nucleophile in the active site. An intrachain disulfide couples C59 to C62.

This sequence belongs to the thioredoxin family. Plant H-type subfamily. In terms of assembly, interacts with MDH1.

The protein localises to the cytoplasm. Its subcellular location is the mitochondrion. Thiol-disulfide oxidoreductase probably involved in the redox regulation of a number of cytosolic enzymes. Possesses insulin disulfide bonds reducing activity. The protein is Thioredoxin H2 (TRX2) of Arabidopsis thaliana (Mouse-ear cress).